The following is a 267-amino-acid chain: NAD kinase 2 (267 aa).

D50 serves as the catalytic Proton acceptor. NAD(+)-binding positions include 50–51 (DG), K55, 122–123 (NE), R149, D151, 162–167 (TAYNKS), and A186.

The protein belongs to the NAD kinase family. Requires a divalent metal cation as cofactor.

The protein localises to the cytoplasm. It catalyses the reaction NAD(+) + ATP = ADP + NADP(+) + H(+). Functionally, involved in the regulation of the intracellular balance of NAD and NADP, and is a key enzyme in the biosynthesis of NADP. Catalyzes specifically the phosphorylation on 2'-hydroxyl of the adenosine moiety of NAD to yield NADP. This is NAD kinase 2 from Listeria monocytogenes serovar 1/2a (strain ATCC BAA-679 / EGD-e).